Consider the following 325-residue polypeptide: Malate dehydrogenase (325 aa).

NADP(+) is bound at residue 7–13 (GSTGRVG). Residues R84 and R90 each coordinate substrate. NADP(+)-binding positions include N97 and 120–122 (VTN). 2 residues coordinate substrate: N122 and R153. H177 (proton acceptor) is an active-site residue.

The protein belongs to the LDH/MDH superfamily.

It carries out the reaction (S)-malate + NADP(+) = oxaloacetate + NADPH + H(+). It catalyses the reaction (S)-malate + NAD(+) = oxaloacetate + NADH + H(+). In terms of biological role, catalyzes the reversible oxidation of malate to oxaloacetate. Can use NAD(+) and NADP(+) with similar specific activity. This chain is Malate dehydrogenase, found in Methanothermobacter marburgensis (strain ATCC BAA-927 / DSM 2133 / JCM 14651 / NBRC 100331 / OCM 82 / Marburg) (Methanobacterium thermoautotrophicum).